The chain runs to 166 residues: Phosphopantetheine adenylyltransferase (166 aa).

Serine 9 is a binding site for substrate. ATP contacts are provided by residues 9-10 and histidine 17; that span reads SF. Lysine 41, leucine 74, and lysine 88 together coordinate substrate. Residues 89–91, glutamate 99, and 123–129 contribute to the ATP site; these read GLR and YVHLSST.

This sequence belongs to the bacterial CoaD family. In terms of assembly, homohexamer. The cofactor is Mg(2+).

The protein resides in the cytoplasm. The catalysed reaction is (R)-4'-phosphopantetheine + ATP + H(+) = 3'-dephospho-CoA + diphosphate. The protein operates within cofactor biosynthesis; coenzyme A biosynthesis; CoA from (R)-pantothenate: step 4/5. Functionally, reversibly transfers an adenylyl group from ATP to 4'-phosphopantetheine, yielding dephospho-CoA (dPCoA) and pyrophosphate. The polypeptide is Phosphopantetheine adenylyltransferase (Paenarthrobacter aurescens (strain TC1)).